We begin with the raw amino-acid sequence, 81 residues long: Conotoxin Cl9.6 (81 aa).

An N-terminal signal peptide occupies residues 1 to 20; it reads MSTLGMTLLILLLLLPLATP. Positions 21 to 40 are excised as a propeptide; that stretch reads DDVGQPPKRDTLRNLLKIGT. 3 disulfides stabilise this stretch: cysteine 46-cysteine 69, cysteine 54-cysteine 76, and cysteine 60-cysteine 78.

In terms of tissue distribution, expressed by the venom duct.

Its subcellular location is the secreted. This Californiconus californicus (California cone) protein is Conotoxin Cl9.6.